Reading from the N-terminus, the 655-residue chain is SRSF protein kinase 1 (655 aa).

Residues 1–57 (MERKVLALQARKKRTKAKKDKAQRKPETQHRGSAPHSESDLPEQEEEILGSDDDEQE) form a disordered region. Over residues 10–22 (ARKKRTKAKKDKA) the composition is skewed to basic residues. The segment covering 40 to 57 (DLPEQEEEILGSDDDEQE) has biased composition (acidic residues). The residue at position 51 (serine 51) is a Phosphoserine; by CK2. The Protein kinase domain occupies 80 to 653 (YHVIRKLGWG…AAECLRHPWL (574 aa)). ATP contacts are provided by residues 86–94 (LGWGHFSTV) and lysine 109. Residue aspartate 213 is the Proton acceptor of the active site. 2 disordered regions span residues 238-341 (WQRS…QDQT) and 397-417 (FLSS…CTPI). Residues 265 to 276 (KNKKKKLKKKQK) show a composition bias toward basic residues. 2 stretches are compositionally biased toward basic and acidic residues: residues 277-288 (RQAELLEKRMQE) and 304-318 (NKQE…RPLK). Phosphoserine is present on residues serine 309, serine 311, and serine 333. Phosphoserine; by CK2 is present on serine 555.

It belongs to the protein kinase superfamily. CMGC Ser/Thr protein kinase family. As to quaternary structure, monomer. Found in a multisubunit complex containing seven proteins, named toposome, which separates entangled circular chromatin DNA during chromosome segregation. Interacts with HHV-1 ICP27 protein. Interacts with DNAJC8 and AHSA1/AHA1 and this mediates formation of a complex with the Hsp70 /Hsp90 machinery. Binds to IGF2BP1, SYNCRIP, HNRNPA2B1 and HNRNPC. Interacts with SAFB/SAFB1 and SAFB2 which inhibits its activity. Mg(2+) is required as a cofactor.

Its subcellular location is the cytoplasm. The protein localises to the nucleus. The protein resides in the nucleoplasm. It localises to the nucleus matrix. It is found in the microsome. Its subcellular location is the nucleus speckle. The protein localises to the chromosome. The enzyme catalyses L-seryl-[protein] + ATP = O-phospho-L-seryl-[protein] + ADP + H(+). It catalyses the reaction L-threonyl-[protein] + ATP = O-phospho-L-threonyl-[protein] + ADP + H(+). Activated by phosphorylation on Ser-51 and Ser-555. In terms of biological role, serine/arginine-rich protein-specific kinase which specifically phosphorylates its substrates at serine residues located in regions rich in arginine/serine dipeptides, known as RS domains and is involved in the phosphorylation of SR splicing factors and the regulation of splicing. Plays a central role in the regulatory network for splicing, controlling the intranuclear distribution of splicing factors in interphase cells and the reorganization of nuclear speckles during mitosis. Can influence additional steps of mRNA maturation, as well as other cellular activities, such as chromatin reorganization in somatic and sperm cells and cell cycle progression. Phosphorylates SFRS2, ZRSR2, LBR and PRM1. Phosphorylates SRSF1 using a directional (C-terminal to N-terminal) and a dual-track mechanism incorporating both processive phosphorylation (in which the kinase stays attached to the substrate after each round of phosphorylation) and distributive phosphorylation steps (in which the kinase and substrate dissociate after each phosphorylation event). The RS domain of SRSF1 binds first to a docking groove in the large lobe of the kinase domain of SRPK1. This induces certain structural changes in SRPK1 and/or RRM2 domain of SRSF1, allowing RRM2 to bind the kinase and initiate phosphorylation. The cycles continue for several phosphorylation steps in a processive manner (steps 1-8) until the last few phosphorylation steps (approximately steps 9-12). During that time, a mechanical stress induces the unfolding of the beta-4 motif in RRM2, which then docks at the docking groove of SRPK1. This also signals RRM2 to begin to dissociate, which facilitates SRSF1 dissociation after phosphorylation is completed. Can mediate hepatitis B virus (HBV) core protein phosphorylation. It plays a negative role in the regulation of HBV replication through a mechanism not involving the phosphorylation of the core protein but by reducing the packaging efficiency of the pregenomic RNA (pgRNA) without affecting the formation of the viral core particles. Can induce splicing of exon 10 in MAPT/TAU. The sequence is that of SRSF protein kinase 1 from Pongo abelii (Sumatran orangutan).